The primary structure comprises 273 residues: MSNSRQHQGHFARKRFGQNFLVDHGVIDSIVTTIGPARGQRMVEIGPGLGALTEPLIARLATPESPLHAVELDRDLIGRLQQRFGPLLELHAGDALAFDFRSLAAPGDKPSLRIVGNLPYNISSPLLFHLMTFADAVIDQHFMLQNEVVERMVAEPGTKAFSRLSVMLQYRYVMEKMLDVPPESFQPPPKVDSAIVRMIPYEPHELPDVDPVLLGEVVTAAFSQRRKMLRNTLGDYRETIDFDGLGFDLARRAEDVSVAEYVGVAQALAAVRR.

Residues N19, L21, G46, E71, D94, and N117 each contribute to the S-adenosyl-L-methionine site.

This sequence belongs to the class I-like SAM-binding methyltransferase superfamily. rRNA adenine N(6)-methyltransferase family. RsmA subfamily.

It is found in the cytoplasm. The catalysed reaction is adenosine(1518)/adenosine(1519) in 16S rRNA + 4 S-adenosyl-L-methionine = N(6)-dimethyladenosine(1518)/N(6)-dimethyladenosine(1519) in 16S rRNA + 4 S-adenosyl-L-homocysteine + 4 H(+). In terms of biological role, specifically dimethylates two adjacent adenosines (A1518 and A1519) in the loop of a conserved hairpin near the 3'-end of 16S rRNA in the 30S particle. May play a critical role in biogenesis of 30S subunits. The protein is Ribosomal RNA small subunit methyltransferase A of Burkholderia ambifaria (strain MC40-6).